Reading from the N-terminus, the 191-residue chain is RNA polymerase sigma factor CnrH (191 aa).

Positions 49–62 match the Polymerase core binding motif; it reads DVVQDTFVAAWHAL. Residues 156–175 constitute a DNA-binding region (H-T-H motif); sequence QPEAAAVLGLSVKAVEGRIG.

The protein belongs to the sigma-70 factor family. ECF subfamily.

Its function is as follows. Sigma factors are initiation factors that promote the attachment of RNA polymerase to specific initiation sites and are then released. This sigma factor regulates the genes for a membrane-located efflux system that confers resistance to nickel and cobalt. Functionally, cnrH alone is able to activate CNR expression, while both CnrY and CrnX are needed for nickel induction of cnrH. Binds DNA in an RNA polymerase-dependent fashion. CnrH may be controlled by a CnrYX transmembrane anti-sigma factor complex which binds CnrH in the absence of Ni(2+). If Ni(2+) appears in the periplasm, it may be bound by CnrR (CnrX); the signal then would be transmitted by CnrY into the cytoplasm and CnrH would be released. This is RNA polymerase sigma factor CnrH (cnrH) from Cupriavidus metallidurans (strain ATCC 43123 / DSM 2839 / NBRC 102507 / CH34) (Ralstonia metallidurans).